Here is a 281-residue protein sequence, read N- to C-terminus: Pantothenate synthetase (281 aa).

30-37 lines the ATP pocket; sequence MGNLHQGH. Residue His-37 is the Proton donor of the active site. Residue Gln-61 participates in (R)-pantoate binding. Beta-alanine is bound at residue Gln-61. ATP is bound at residue 149-152; the sequence is GNKD. Residue Gln-155 coordinates (R)-pantoate. ATP is bound by residues Ile-178 and 186–189; that span reads MSSR.

This sequence belongs to the pantothenate synthetase family. In terms of assembly, homodimer.

It is found in the cytoplasm. The catalysed reaction is (R)-pantoate + beta-alanine + ATP = (R)-pantothenate + AMP + diphosphate + H(+). It participates in cofactor biosynthesis; (R)-pantothenate biosynthesis; (R)-pantothenate from (R)-pantoate and beta-alanine: step 1/1. In terms of biological role, catalyzes the condensation of pantoate with beta-alanine in an ATP-dependent reaction via a pantoyl-adenylate intermediate. In Shewanella sp. (strain ANA-3), this protein is Pantothenate synthetase.